The primary structure comprises 63 residues: Small ribosomal subunit protein eS27 (63 aa).

4 residues coordinate Zn(2+): cysteine 18, cysteine 21, cysteine 37, and cysteine 40. Residues 18–40 form a C4-type zinc finger; sequence CLDCGNQQVVFDRAASYVQCIIC.

It belongs to the eukaryotic ribosomal protein eS27 family. Part of the 30S ribosomal subunit. The cofactor is Zn(2+).

In Methanothermobacter thermautotrophicus (strain ATCC 29096 / DSM 1053 / JCM 10044 / NBRC 100330 / Delta H) (Methanobacterium thermoautotrophicum), this protein is Small ribosomal subunit protein eS27.